Consider the following 362-residue polypeptide: Chorismate synthase (362 aa).

Residue arginine 47 participates in NADP(+) binding. Residues 124–126, glycine 286, 301–305, and arginine 327 each bind FMN; these read RSS and KPTAT.

It belongs to the chorismate synthase family. In terms of assembly, homotetramer. The cofactor is FMNH2.

The enzyme catalyses 5-O-(1-carboxyvinyl)-3-phosphoshikimate = chorismate + phosphate. Its pathway is metabolic intermediate biosynthesis; chorismate biosynthesis; chorismate from D-erythrose 4-phosphate and phosphoenolpyruvate: step 7/7. Functionally, catalyzes the anti-1,4-elimination of the C-3 phosphate and the C-6 proR hydrogen from 5-enolpyruvylshikimate-3-phosphate (EPSP) to yield chorismate, which is the branch point compound that serves as the starting substrate for the three terminal pathways of aromatic amino acid biosynthesis. This reaction introduces a second double bond into the aromatic ring system. The sequence is that of Chorismate synthase from Trichormus variabilis (strain ATCC 29413 / PCC 7937) (Anabaena variabilis).